Consider the following 767-residue polypeptide: Polyribonucleotide nucleotidyltransferase (767 aa).

2 residues coordinate Mg(2+): D509 and D515. A KH domain is found at 575–634; it reads PRILTVKVPIDKIGEVIGPKGKMINSIQDETGAEITIEDDGTIYIGATDGPSAEAARDAI. The S1 motif domain occupies 646–718; it reads GERYLGTVVK…ERGKLSLVPV (73 aa). The segment at 725–767 is disordered; it reads AVAAPNGGESPNGAKKTDASGNGAKQPRRRRRTRSSSRSSENT. The segment covering 750–759 has biased composition (basic residues); sequence QPRRRRRTRS.

This sequence belongs to the polyribonucleotide nucleotidyltransferase family. It depends on Mg(2+) as a cofactor.

The protein resides in the cytoplasm. It catalyses the reaction RNA(n+1) + phosphate = RNA(n) + a ribonucleoside 5'-diphosphate. Its function is as follows. Involved in mRNA degradation. Catalyzes the phosphorolysis of single-stranded polyribonucleotides processively in the 3'- to 5'-direction. The polypeptide is Polyribonucleotide nucleotidyltransferase (Thermobifida fusca (strain YX)).